The sequence spans 193 residues: dITP/XTP pyrophosphatase (193 aa).

7-12 (SENENK) is a substrate binding site. The Proton acceptor role is filled by D65. D65 provides a ligand contact to Mg(2+). Substrate-binding positions include S66, 144-147 (FGYD), K167, and 172-173 (HR).

This sequence belongs to the HAM1 NTPase family. As to quaternary structure, homodimer. It depends on Mg(2+) as a cofactor.

It carries out the reaction XTP + H2O = XMP + diphosphate + H(+). It catalyses the reaction dITP + H2O = dIMP + diphosphate + H(+). The catalysed reaction is ITP + H2O = IMP + diphosphate + H(+). Its function is as follows. Pyrophosphatase that catalyzes the hydrolysis of nucleoside triphosphates to their monophosphate derivatives, with a high preference for the non-canonical purine nucleotides XTP (xanthosine triphosphate), dITP (deoxyinosine triphosphate) and ITP. Seems to function as a house-cleaning enzyme that removes non-canonical purine nucleotides from the nucleotide pool, thus preventing their incorporation into DNA/RNA and avoiding chromosomal lesions. This Tropheryma whipplei (strain Twist) (Whipple's bacillus) protein is dITP/XTP pyrophosphatase.